The following is a 227-amino-acid chain: uncharacterized protein (227 aa).

Positions 5 to 220 constitute an AMMECR1 domain; that stretch reads TSSPYAFYAF…IAWDEFETGL (216 aa).

This is an uncharacterized protein from Kluyveromyces lactis (strain ATCC 8585 / CBS 2359 / DSM 70799 / NBRC 1267 / NRRL Y-1140 / WM37) (Yeast).